A 377-amino-acid chain; its full sequence is N5-carboxyaminoimidazole ribonucleotide synthase (377 aa).

Residues Arg93, Lys133, 138–144 (GYDGKGQ), 175–178 (EEFV), Glu183, His206, and 257–258 (NE) each bind ATP. The 191-residue stretch at 97–287 (KALLDNAGVR…QFENHLRAVC (191 aa)) folds into the ATP-grasp domain.

It belongs to the PurK/PurT family. Homodimer.

It carries out the reaction 5-amino-1-(5-phospho-beta-D-ribosyl)imidazole + hydrogencarbonate + ATP = 5-carboxyamino-1-(5-phospho-D-ribosyl)imidazole + ADP + phosphate + 2 H(+). It functions in the pathway purine metabolism; IMP biosynthesis via de novo pathway; 5-amino-1-(5-phospho-D-ribosyl)imidazole-4-carboxylate from 5-amino-1-(5-phospho-D-ribosyl)imidazole (N5-CAIR route): step 1/2. Catalyzes the ATP-dependent conversion of 5-aminoimidazole ribonucleotide (AIR) and HCO(3)(-) to N5-carboxyaminoimidazole ribonucleotide (N5-CAIR). The protein is N5-carboxyaminoimidazole ribonucleotide synthase of Vibrio parahaemolyticus serotype O3:K6 (strain RIMD 2210633).